The sequence spans 200 residues: NAD(P)H dehydrogenase (quinone) (200 aa).

The Flavodoxin-like domain occupies 7–199 (LAIVFYSSTG…RQVELTAKLL (193 aa)). Residues 13–18 (SSTGTG), 86–88 (TRF), 121–127 (SAQNVNG), and H142 each bind FMN.

Belongs to the WrbA family. In terms of assembly, homotetramer. It depends on FMN as a cofactor.

The catalysed reaction is a quinone + NADH + H(+) = a quinol + NAD(+). The enzyme catalyses a quinone + NADPH + H(+) = a quinol + NADP(+). The chain is NAD(P)H dehydrogenase (quinone) from Deinococcus radiodurans (strain ATCC 13939 / DSM 20539 / JCM 16871 / CCUG 27074 / LMG 4051 / NBRC 15346 / NCIMB 9279 / VKM B-1422 / R1).